We begin with the raw amino-acid sequence, 282 residues long: Pantothenate synthetase (282 aa).

26–33 provides a ligand contact to ATP; sequence MGNLHEGH. Catalysis depends on histidine 33, which acts as the Proton donor. Glutamine 57 contacts (R)-pantoate. Residue glutamine 57 participates in beta-alanine binding. Residue 148-151 coordinates ATP; that stretch reads GKKD. Glutamine 154 contributes to the (R)-pantoate binding site. An ATP-binding site is contributed by 185–188; the sequence is LSSR.

This sequence belongs to the pantothenate synthetase family. In terms of assembly, homodimer.

It is found in the cytoplasm. The enzyme catalyses (R)-pantoate + beta-alanine + ATP = (R)-pantothenate + AMP + diphosphate + H(+). Its pathway is cofactor biosynthesis; (R)-pantothenate biosynthesis; (R)-pantothenate from (R)-pantoate and beta-alanine: step 1/1. Functionally, catalyzes the condensation of pantoate with beta-alanine in an ATP-dependent reaction via a pantoyl-adenylate intermediate. The protein is Pantothenate synthetase of Paracidovorax citrulli (strain AAC00-1) (Acidovorax citrulli).